Consider the following 444-residue polypeptide: C4-dicarboxylate transport protein (444 aa).

The next 9 membrane-spanning stretches (helical) occupy residues 15–35, 46–66, 78–98, 143–163, 199–219, 224–244, 291–311, 332–352, and 354–374; these read VIVA…FGVA, LIKM…IAGM, YALL…LIVV, IVGA…VIFG, PIGA…GSLV, LMIC…GGIA, VVGL…AIYL, ITLL…TGSG, and IVLA…LALI. The segment at 422–444 is disordered; it reads GIADTRPEDDLGVAEGPTPSNVK.

Belongs to the dicarboxylate/amino acid:cation symporter (DAACS) (TC 2.A.23) family.

The protein resides in the cell inner membrane. Its function is as follows. Responsible for the transport of dicarboxylates such as succinate, fumarate, and malate from the periplasm across the membrane. The polypeptide is C4-dicarboxylate transport protein (Pseudomonas fluorescens (strain Pf0-1)).